Reading from the N-terminus, the 205-residue chain is uncharacterized protein (205 aa).

This is an uncharacterized protein from Orgyia pseudotsugata (Douglas-fir tussock moth).